Consider the following 402-residue polypeptide: Acyl-[acyl-carrier-protein] desaturase 3, chloroplastic (402 aa).

Disordered stretches follow at residues 1–25 (MSLT…GGAS) and 38–66 (VGGI…THTL). The N-terminal 32 residues, 1–32 (MSLTGCLPPRPPCSMRRRTSGGGASVSPVVVM), are a transit peptide targeting the chloroplast. Fe cation-binding residues include E139, E178, H181, E231, E264, and H267.

Belongs to the fatty acid desaturase type 2 family. As to quaternary structure, homodimer. The cofactor is Fe(2+).

Its subcellular location is the plastid. The protein resides in the chloroplast. Its pathway is lipid metabolism; fatty acid metabolism. Introduces a cis double bond in the acyl chain of an acyl-[acyl-carrier protein]. The chain is Acyl-[acyl-carrier-protein] desaturase 3, chloroplastic from Oryza sativa subsp. indica (Rice).